The following is a 230-amino-acid chain: 7-cyano-7-deazaguanine synthase (230 aa).

Position 8 to 18 (8 to 18 (LSGGMDSAVVT)) interacts with ATP. Residues C186, C196, C199, and C202 each coordinate Zn(2+).

This sequence belongs to the QueC family. Requires Zn(2+) as cofactor.

The enzyme catalyses 7-carboxy-7-deazaguanine + NH4(+) + ATP = 7-cyano-7-deazaguanine + ADP + phosphate + H2O + H(+). It participates in purine metabolism; 7-cyano-7-deazaguanine biosynthesis. Functionally, catalyzes the ATP-dependent conversion of 7-carboxy-7-deazaguanine (CDG) to 7-cyano-7-deazaguanine (preQ(0)). This Xylella fastidiosa (strain M12) protein is 7-cyano-7-deazaguanine synthase.